The sequence spans 505 residues: ATP synthase subunit beta (505 aa).

158–165 (GGAGVGKT) is a binding site for ATP.

It belongs to the ATPase alpha/beta chains family. As to quaternary structure, F-type ATPases have 2 components, CF(1) - the catalytic core - and CF(0) - the membrane proton channel. CF(1) has five subunits: alpha(3), beta(3), gamma(1), delta(1), epsilon(1). CF(0) has three main subunits: a(1), b(2) and c(9-12). The alpha and beta chains form an alternating ring which encloses part of the gamma chain. CF(1) is attached to CF(0) by a central stalk formed by the gamma and epsilon chains, while a peripheral stalk is formed by the delta and b chains.

Its subcellular location is the cell inner membrane. The catalysed reaction is ATP + H2O + 4 H(+)(in) = ADP + phosphate + 5 H(+)(out). Its function is as follows. Produces ATP from ADP in the presence of a proton gradient across the membrane. The catalytic sites are hosted primarily by the beta subunits. The chain is ATP synthase subunit beta from Parabacteroides distasonis (strain ATCC 8503 / DSM 20701 / CIP 104284 / JCM 5825 / NCTC 11152).